The sequence spans 311 residues: Probable cell division protein WhiA (311 aa).

The segment at residues 274-308 (SLKELGEMIPSGAISKSGINHRIRKINEFAEKLRE) is a DNA-binding region (H-T-H motif).

The protein belongs to the WhiA family.

In terms of biological role, involved in cell division and chromosome segregation. The protein is Probable cell division protein WhiA of Enterococcus faecalis (strain ATCC 700802 / V583).